A 232-amino-acid chain; its full sequence is Phosphoribosylformylglycinamidine synthase subunit PurQ (232 aa).

The Glutamine amidotransferase type-1 domain occupies 2-232 (KIAIIQFGGT…SMADYITENF (231 aa)). The active-site Nucleophile is C86. Active-site residues include H203 and E205.

Part of the FGAM synthase complex composed of 1 PurL, 1 PurQ and 2 PurS subunits.

Its subcellular location is the cytoplasm. The catalysed reaction is N(2)-formyl-N(1)-(5-phospho-beta-D-ribosyl)glycinamide + L-glutamine + ATP + H2O = 2-formamido-N(1)-(5-O-phospho-beta-D-ribosyl)acetamidine + L-glutamate + ADP + phosphate + H(+). It carries out the reaction L-glutamine + H2O = L-glutamate + NH4(+). Its pathway is purine metabolism; IMP biosynthesis via de novo pathway; 5-amino-1-(5-phospho-D-ribosyl)imidazole from N(2)-formyl-N(1)-(5-phospho-D-ribosyl)glycinamide: step 1/2. Part of the phosphoribosylformylglycinamidine synthase complex involved in the purines biosynthetic pathway. Catalyzes the ATP-dependent conversion of formylglycinamide ribonucleotide (FGAR) and glutamine to yield formylglycinamidine ribonucleotide (FGAM) and glutamate. The FGAM synthase complex is composed of three subunits. PurQ produces an ammonia molecule by converting glutamine to glutamate. PurL transfers the ammonia molecule to FGAR to form FGAM in an ATP-dependent manner. PurS interacts with PurQ and PurL and is thought to assist in the transfer of the ammonia molecule from PurQ to PurL. This is Phosphoribosylformylglycinamidine synthase subunit PurQ from Methanosarcina acetivorans (strain ATCC 35395 / DSM 2834 / JCM 12185 / C2A).